The following is a 428-amino-acid chain: Elongation factor 1-alpha (428 aa).

The region spanning 5–217 is the tr-type G domain; that stretch reads KPHVNIVFIG…DQIPEPEKPT (213 aa). A G1 region spans residues 14–21; that stretch reads GHVDHGKS. Residue 14-21 participates in GTP binding; sequence GHVDHGKS. Residue serine 21 coordinates Mg(2+). The G2 stretch occupies residues 68–72; the sequence is GITID. The G3 stretch occupies residues 89 to 92; sequence DAPG. GTP contacts are provided by residues 89–93 and 144–147; these read DAPGH and NKMD. The interval 144 to 147 is G4; that stretch reads NKMD. The segment at 181-183 is G5; sequence SAW.

This sequence belongs to the TRAFAC class translation factor GTPase superfamily. Classic translation factor GTPase family. EF-Tu/EF-1A subfamily.

The protein localises to the cytoplasm. It catalyses the reaction GTP + H2O = GDP + phosphate + H(+). In terms of biological role, GTP hydrolase that promotes the GTP-dependent binding of aminoacyl-tRNA to the A-site of ribosomes during protein biosynthesis. The chain is Elongation factor 1-alpha from Thermococcus sibiricus (strain DSM 12597 / MM 739).